A 186-amino-acid polypeptide reads, in one-letter code: Acireductone dioxygenase (186 aa).

Positions 103, 105, 109, and 147 each coordinate Fe(2+). Residues H103, H105, E109, and H147 each contribute to the Ni(2+) site.

Belongs to the acireductone dioxygenase (ARD) family. Monomer. Fe(2+) serves as cofactor. The cofactor is Ni(2+).

It catalyses the reaction 1,2-dihydroxy-5-(methylsulfanyl)pent-1-en-3-one + O2 = 3-(methylsulfanyl)propanoate + CO + formate + 2 H(+). The enzyme catalyses 1,2-dihydroxy-5-(methylsulfanyl)pent-1-en-3-one + O2 = 4-methylsulfanyl-2-oxobutanoate + formate + 2 H(+). Its pathway is amino-acid biosynthesis; L-methionine biosynthesis via salvage pathway; L-methionine from S-methyl-5-thio-alpha-D-ribose 1-phosphate: step 5/6. Catalyzes 2 different reactions between oxygen and the acireductone 1,2-dihydroxy-3-keto-5-methylthiopentene (DHK-MTPene) depending upon the metal bound in the active site. Fe-containing acireductone dioxygenase (Fe-ARD) produces formate and 2-keto-4-methylthiobutyrate (KMTB), the alpha-ketoacid precursor of methionine in the methionine recycle pathway. Ni-containing acireductone dioxygenase (Ni-ARD) produces methylthiopropionate, carbon monoxide and formate, and does not lie on the methionine recycle pathway. In Synechococcus sp. (strain CC9605), this protein is Acireductone dioxygenase.